A 309-amino-acid polypeptide reads, in one-letter code: Bifunctional methylenetetrahydrofolate dehydrogenase/cyclohydrolase, mitochondrial (309 aa).

It belongs to the tetrahydrofolate dehydrogenase/cyclohydrolase family. As to quaternary structure, homodimer. Requires Mg(2+) as cofactor.

The protein resides in the mitochondrion. The enzyme catalyses (6R)-5,10-methylene-5,6,7,8-tetrahydrofolate + NAD(+) = (6R)-5,10-methenyltetrahydrofolate + NADH. It catalyses the reaction (6R)-5,10-methenyltetrahydrofolate + H2O = (6R)-10-formyltetrahydrofolate + H(+). Its function is as follows. May play a role in spermatogenesis. This chain is Bifunctional methylenetetrahydrofolate dehydrogenase/cyclohydrolase, mitochondrial (Nmdmc), found in Drosophila melanogaster (Fruit fly).